We begin with the raw amino-acid sequence, 338 residues long: Lipoate-protein ligase A (338 aa).

The BPL/LPL catalytic domain occupies 29-216; that stretch reads DPNQRVLFLW…AFFAHYGARV (188 aa). Residues Arg-71, 76–79, and Lys-134 contribute to the ATP site; that span reads GAVF. Lys-134 contacts (R)-lipoate.

The protein belongs to the LplA family. Monomer.

The protein resides in the cytoplasm. It catalyses the reaction L-lysyl-[lipoyl-carrier protein] + (R)-lipoate + ATP = N(6)-[(R)-lipoyl]-L-lysyl-[lipoyl-carrier protein] + AMP + diphosphate + H(+). The protein operates within protein modification; protein lipoylation via exogenous pathway; protein N(6)-(lipoyl)lysine from lipoate: step 1/2. It functions in the pathway protein modification; protein lipoylation via exogenous pathway; protein N(6)-(lipoyl)lysine from lipoate: step 2/2. In terms of biological role, catalyzes both the ATP-dependent activation of exogenously supplied lipoate to lipoyl-AMP and the transfer of the activated lipoyl onto the lipoyl domains of lipoate-dependent enzymes. The sequence is that of Lipoate-protein ligase A from Aeromonas salmonicida (strain A449).